The chain runs to 207 residues: Succinyl-CoA:3-ketoacid coenzyme A transferase subunit B (207 aa).

Residue glutamate 43 is part of the active site.

Belongs to the 3-oxoacid CoA-transferase subunit B family. Heterodimer of a subunit A and a subunit B.

The catalysed reaction is a 3-oxo acid + succinyl-CoA = a 3-oxoacyl-CoA + succinate. The sequence is that of Succinyl-CoA:3-ketoacid coenzyme A transferase subunit B (scoB) from Helicobacter pylori (strain ATCC 700392 / 26695) (Campylobacter pylori).